The sequence spans 243 residues: PF03932 family protein CutC (243 aa).

This sequence belongs to the CutC family.

The protein resides in the cytoplasm. This Parabacteroides distasonis (strain ATCC 8503 / DSM 20701 / CIP 104284 / JCM 5825 / NCTC 11152) protein is PF03932 family protein CutC.